A 99-amino-acid chain; its full sequence is Co-chaperonin GroES (99 aa).

It belongs to the GroES chaperonin family. Heptamer of 7 subunits arranged in a ring. Interacts with the chaperonin GroEL.

It is found in the cytoplasm. Together with the chaperonin GroEL, plays an essential role in assisting protein folding. The GroEL-GroES system forms a nano-cage that allows encapsulation of the non-native substrate proteins and provides a physical environment optimized to promote and accelerate protein folding. GroES binds to the apical surface of the GroEL ring, thereby capping the opening of the GroEL channel. This is Co-chaperonin GroES from Corynebacterium efficiens (strain DSM 44549 / YS-314 / AJ 12310 / JCM 11189 / NBRC 100395).